Consider the following 679-residue polypeptide: HEAT repeat-containing protein 3 (679 aa).

Positions 1–11 are enriched in basic residues; it reads MGKSRTKRFKR. Residues 1–40 form a disordered region; the sequence is MGKSRTKRFKRPQFSPIESCQAEAAAASNGTGDEEDDGPA. At S15 the chain carries Phosphoserine. HEAT repeat units lie at residues 38-69 and 74-110; these read GPAA…VQQR and DLAR…SACG. S144 bears the Phosphoserine mark. The residue at position 339 (T339) is a Phosphothreonine.

Belongs to the nuclear import and ribosome assembly adapter family. In terms of assembly, component of a hexameric 5S RNP precursor complex, composed of 5S RNA, RRS1, RPF2/BXDC1, RPL5, RPL11 and HEATR3; this complex acts as a precursor for ribosome assembly.

Functionally, plays a role in ribosome biogenesis and in nuclear import of the 60S ribosomal protein L5/large ribosomal subunit protein uL18 (RPL5). Required for proper erythrocyte maturation. This Mus musculus (Mouse) protein is HEAT repeat-containing protein 3 (Heatr3).